Consider the following 305-residue polypeptide: GMP synthase [glutamine-hydrolyzing] subunit B (305 aa).

Positions 2 to 184 constitute a GMPS ATP-PPase domain; that stretch reads VKPEKFIPKA…LKLPDEICER (183 aa). 29-35 lines the ATP pocket; sequence SGGVDSS.

Heterodimer composed of a glutamine amidotransferase subunit (A) and a GMP-binding subunit (B).

It catalyses the reaction XMP + L-glutamine + ATP + H2O = GMP + L-glutamate + AMP + diphosphate + 2 H(+). The protein operates within purine metabolism; GMP biosynthesis; GMP from XMP (L-Gln route): step 1/1. In terms of biological role, catalyzes the synthesis of GMP from XMP. This chain is GMP synthase [glutamine-hydrolyzing] subunit B, found in Methanosarcina barkeri (strain Fusaro / DSM 804).